The sequence spans 237 residues: Tetraspanin-8 (237 aa).

Residues 1-9 (MAGVSACIK) lie on the Cytoplasmic side of the membrane. A helical transmembrane segment spans residues 10-33 (YSMFTFNFLFWLCGILILALAIWV). Residues 34-57 (RVSNDSQAIFGSEDVGSSSYVAVD) lie on the Extracellular side of the membrane. A helical transmembrane segment spans residues 58 to 72 (ILIAVGAIIMILGFL). The Cytoplasmic portion of the chain corresponds to 73 to 83 (GCCGAIKESRC). Residues 84–109 (MLLLFFIGLLLILLLQVATGILGAVF) traverse the membrane as a helical segment. The Extracellular segment spans residues 110–205 (KSKSDRIVNE…SFIKDFLAKN (96 aa)). Asn-118 carries N-linked (GlcNAc...) asparagine glycosylation. The helical transmembrane segment at 206 to 230 (LIIVIGISFGLAVIEILGLVFSMVL) threads the bilayer. At 231-237 (YCQIGNK) the chain is on the cytoplasmic side.

Belongs to the tetraspanin (TM4SF) family. In terms of assembly, forms homooligomers. Interacts with MEP1B. Interacts with integrin alpha3/ITGA3. Interacts with RICTOR and MTOR. Interacts with ADAM17. Interacts with ECE1. Gastric, colon, rectal, and pancreatic carcinomas.

It localises to the cell membrane. In terms of biological role, structural component of specialized membrane microdomains known as tetraspanin-enriched microdomains (TERMs), which act as platforms for receptor clustering and signaling. Participates thereby in diverse biological functions such as cell signal transduction, migration and protein trafficking. Promotes ADAM17-mediated TNF-alpha processing through recruitment of ADAM17 to tetraspanin-enriched micro-domains (TEMs). Forms a complex with RICTOR and integrin alpha3/ITGA3 to mediate mTORC2 activation and AKT1 phosphorylation leading to cell migration. Reduces apoptosis and autophagy induced by high glucose levels through forming a complex with mTOR and RICTOR. Contributes to the maintenance of intestinal epithelial barrier and plays a role in the regulation of intestine inflammation by switching interferon gamma receptor 1/IFNGR1 from clathrin-dependent to lipid raft-dependent endocytosis route to limit STAT1 activation magnitude and duration. Acts as a modulator of the endothelin axis by associating with endothelin converting enzyme ECE1 and regulating its activity of conversion of the endothelin-1 precursor to endothelin. The chain is Tetraspanin-8 (TSPAN8) from Homo sapiens (Human).